A 298-amino-acid chain; its full sequence is Acetylglutamate kinase (298 aa).

Residues glycine 69 to glycine 70, arginine 91, and asparagine 196 contribute to the substrate site.

The protein belongs to the acetylglutamate kinase family. ArgB subfamily.

It is found in the cytoplasm. It carries out the reaction N-acetyl-L-glutamate + ATP = N-acetyl-L-glutamyl 5-phosphate + ADP. Its pathway is amino-acid biosynthesis; L-arginine biosynthesis; N(2)-acetyl-L-ornithine from L-glutamate: step 2/4. In terms of biological role, catalyzes the ATP-dependent phosphorylation of N-acetyl-L-glutamate. The chain is Acetylglutamate kinase from Nitrobacter winogradskyi (strain ATCC 25391 / DSM 10237 / CIP 104748 / NCIMB 11846 / Nb-255).